We begin with the raw amino-acid sequence, 199 residues long: Probable NADH dehydrogenase [ubiquinone] iron-sulfur protein 7, mitochondrial (199 aa).

The transit peptide at 1–16 directs the protein to the mitochondrion; it reads MLSALRTAGALSTRRL. 4 residues coordinate [4Fe-4S] cluster: Cys-74, Cys-75, Cys-139, and Cys-169.

It belongs to the complex I 20 kDa subunit family. As to quaternary structure, complex I is composed of 45 different subunits This is a component of the iron-sulfur (IP) fragment of the enzyme. [4Fe-4S] cluster serves as cofactor.

It localises to the mitochondrion. The enzyme catalyses a ubiquinone + NADH + 5 H(+)(in) = a ubiquinol + NAD(+) + 4 H(+)(out). Its function is as follows. Core subunit of the mitochondrial membrane respiratory chain NADH dehydrogenase (Complex I) that is believed to belong to the minimal assembly required for catalysis. Complex I functions in the transfer of electrons from NADH to the respiratory chain. The immediate electron acceptor for the enzyme is believed to be ubiquinone. The polypeptide is Probable NADH dehydrogenase [ubiquinone] iron-sulfur protein 7, mitochondrial (Caenorhabditis briggsae).